Consider the following 124-residue polypeptide: Small ribosomal subunit protein uS12 (124 aa).

Aspartate 90 is modified (3-methylthioaspartic acid).

This sequence belongs to the universal ribosomal protein uS12 family. In terms of assembly, part of the 30S ribosomal subunit. Contacts proteins S8 and S17. May interact with IF1 in the 30S initiation complex.

Functionally, with S4 and S5 plays an important role in translational accuracy. Interacts with and stabilizes bases of the 16S rRNA that are involved in tRNA selection in the A site and with the mRNA backbone. Located at the interface of the 30S and 50S subunits, it traverses the body of the 30S subunit contacting proteins on the other side and probably holding the rRNA structure together. The combined cluster of proteins S8, S12 and S17 appears to hold together the shoulder and platform of the 30S subunit. The protein is Small ribosomal subunit protein uS12 of Wolbachia sp. subsp. Drosophila simulans (strain wRi).